The primary structure comprises 85 residues: RNA-binding protein Hfq (85 aa).

Residues 10 to 70 (DIFLNGARKN…ISTINPAKPL (61 aa)) enclose the Sm domain.

This sequence belongs to the Hfq family. Homohexamer.

Its function is as follows. RNA chaperone that binds small regulatory RNA (sRNAs) and mRNAs to facilitate mRNA translational regulation in response to envelope stress, environmental stress and changes in metabolite concentrations. Also binds with high specificity to tRNAs. The sequence is that of RNA-binding protein Hfq from Clostridium botulinum (strain 657 / Type Ba4).